Consider the following 887-residue polypeptide: PAN2-PAN3 deadenylation complex subunit Pan3 (887 aa).

The segment at 49-77 adopts a C3H1-type zinc-finger fold; sequence GVKLKYCRYYAKDKTCFYGEECQFLHEDP. Disordered regions lie at residues 111 to 139, 280 to 307, and 321 to 393; these read GGGA…GLDG, ENNL…SNVS, and PSMG…GQVI. The segment at 147-498 is necessary and sufficient for interaction with PABPC1 but not needed for interaction with PAN2; the sequence is MDGGALTDAS…PPPNRIQKSS (352 aa). Composition is skewed to polar residues over residues 281–290 and 298–307; these read NNLQTPNPTA and GSTSRLSNVS. Positions 284–299 match the PABPC-interacting motif-2 (PAM-2) motif; it reads QTPNPTASEFIPKGGS. Phosphoserine is present on residues Ser-354 and Ser-361. Positions 463-750 are pseudokinase domain; it reads QIDQADMPAV…SVNDIMPMIG (288 aa). ATP-binding positions include Arg-521, 570-577, and 644-645; these read DFHAGGET and TK. The interval 789-887 is knob domain; that stretch reads TINERPEFQK…ELIAAANGQL (99 aa).

It belongs to the protein kinase superfamily. PAN3 family. In terms of assembly, homodimer. Forms a heterotrimer with a catalytic subunit PAN2 to form the poly(A)-nuclease (PAN) deadenylation complex. Interacts (via PAM-2 motif) with poly(A)-binding protein PABPC1 (via PABC domain), conferring substrate specificity of the enzyme complex. Interacts with the GW182 family proteins TNRC6A, TNRC6B and TNRC6C. Interacts with YTHDF3. As to quaternary structure, interacts with PAN2. Interacts (via N-terminus) with PABPC1 at lower efficiency than isoform 3. Interacts with PAN2. Interacts (via N-terminus) with PABPC1 at higher efficiency than isoform 1.

The protein localises to the cytoplasm. It is found in the P-body. The protein resides in the nucleus. Its function is as follows. Regulatory subunit of the poly(A)-nuclease (PAN) deadenylation complex, one of two cytoplasmic mRNA deadenylases involved in general and miRNA-mediated mRNA turnover. PAN specifically shortens poly(A) tails of RNA and the activity is stimulated by poly(A)-binding protein (PABP). PAN deadenylation is followed by rapid degradation of the shortened mRNA tails by the CCR4-NOT complex. Deadenylated mRNAs are then degraded by two alternative mechanisms, namely exosome-mediated 3'-5' exonucleolytic degradation, or deadenylation-dependent mRNA decapping and subsequent 5'-3' exonucleolytic degradation by XRN1. PAN3 acts as a regulator for PAN activity, recruiting the catalytic subunit PAN2 to mRNA via its interaction with RNA and PABP, and to miRNA targets via its interaction with GW182 family proteins. Functionally, decreases PAN2-mediated deadenylation, possibly by preventing progression into the second CCR4-NOT mediated stage of biphasic deadenylation. Has a significant effect on mRNA stability, generally stabilizing a subset of the transcriptome. Stabilizes mRNAs degraded by the AU-rich element (ARE)-mediated mRNA decay pathway but promotes degradation of mRNAs by the microRNA-mediated pathway. Its activity influences mRNP remodeling, specifically reducing formation of a subset of P-bodies containing GW220, an isoform of TNRC6A. In terms of biological role, enhances PAN2 deadenylase activity and has an extensive effect on mRNA stability, generally enhancing mRNA decay across the transcriptome by multiple pathways, including the AU-rich element (ARE)-mediated pathway, microRNA-mediated pathway and the nonsense-mediated pathway (NMD). Its activity is required for efficient P-body formation. May be involved in regulating mRNAs of genes involved in cell cycle progression and cell proliferation. In Mus musculus (Mouse), this protein is PAN2-PAN3 deadenylation complex subunit Pan3.